A 412-amino-acid chain; its full sequence is Putative competence-damage inducible protein (412 aa).

It belongs to the CinA family.

The sequence is that of Putative competence-damage inducible protein from Bacillus cereus (strain AH820).